We begin with the raw amino-acid sequence, 861 residues long: Bifunctional uridylyltransferase/uridylyl-removing enzyme (861 aa).

Residues 1 to 321 (MKNDNRIIKN…VYHQKQKIIR (321 aa)) are uridylyltransferase. The interval 322–678 (LDDEFQLSNR…IMPHHSQGGT (357 aa)) is uridylyl-removing. An HD domain is found at 440-562 (VDQHTLFVIR…LPHARYLDYL (123 aa)). ACT domains lie at 679 to 760 (EVFI…AVSR) and 788 to 861 (QLFL…KSKY).

Belongs to the GlnD family. Mg(2+) is required as a cofactor.

The enzyme catalyses [protein-PII]-L-tyrosine + UTP = [protein-PII]-uridylyl-L-tyrosine + diphosphate. It carries out the reaction [protein-PII]-uridylyl-L-tyrosine + H2O = [protein-PII]-L-tyrosine + UMP + H(+). Uridylyltransferase (UTase) activity is inhibited by glutamine, while glutamine activates uridylyl-removing (UR) activity. Its function is as follows. Modifies, by uridylylation and deuridylylation, the PII regulatory proteins (GlnB and homologs), in response to the nitrogen status of the cell that GlnD senses through the glutamine level. Under low glutamine levels, catalyzes the conversion of the PII proteins and UTP to PII-UMP and PPi, while under higher glutamine levels, GlnD hydrolyzes PII-UMP to PII and UMP (deuridylylation). Thus, controls uridylylation state and activity of the PII proteins, and plays an important role in the regulation of nitrogen assimilation and metabolism. This chain is Bifunctional uridylyltransferase/uridylyl-removing enzyme, found in Legionella pneumophila subsp. pneumophila (strain Philadelphia 1 / ATCC 33152 / DSM 7513).